The primary structure comprises 137 residues: Large ribosomal subunit protein uL16c (137 aa).

This sequence belongs to the universal ribosomal protein uL16 family. As to quaternary structure, part of the 50S ribosomal subunit.

The protein resides in the plastid. It localises to the chloroplast. The sequence is that of Large ribosomal subunit protein uL16c from Hordeum vulgare (Barley).